A 111-amino-acid chain; its full sequence is Small ribosomal subunit protein bS16 (111 aa).

Belongs to the bacterial ribosomal protein bS16 family.

In Rickettsia felis (strain ATCC VR-1525 / URRWXCal2) (Rickettsia azadi), this protein is Small ribosomal subunit protein bS16.